A 119-amino-acid polypeptide reads, in one-letter code: Small ribosomal subunit protein uS10 (119 aa).

This sequence belongs to the universal ribosomal protein uS10 family. In terms of assembly, component of the 40S small ribosomal subunit.

Its subcellular location is the cytoplasm. In terms of biological role, component of the small ribosomal subunit. The ribosome is a large ribonucleoprotein complex responsible for the synthesis of proteins in the cell. This chain is Small ribosomal subunit protein uS10 (rps20), found in Xenopus laevis (African clawed frog).